The chain runs to 121 residues: Ribosome-binding factor A (121 aa).

This sequence belongs to the RbfA family. In terms of assembly, monomer. Binds 30S ribosomal subunits, but not 50S ribosomal subunits or 70S ribosomes.

The protein localises to the cytoplasm. In terms of biological role, one of several proteins that assist in the late maturation steps of the functional core of the 30S ribosomal subunit. Associates with free 30S ribosomal subunits (but not with 30S subunits that are part of 70S ribosomes or polysomes). Required for efficient processing of 16S rRNA. May interact with the 5'-terminal helix region of 16S rRNA. This is Ribosome-binding factor A from Clostridium acetobutylicum (strain ATCC 824 / DSM 792 / JCM 1419 / IAM 19013 / LMG 5710 / NBRC 13948 / NRRL B-527 / VKM B-1787 / 2291 / W).